The chain runs to 68 residues: Conotoxin ba14a (68 aa).

The signal sequence occupies residues 1 to 20 (MKLSVMFIVALVLSLSMTDG). Positions 21–50 (LPRRAENGGRIFRQHSPDSMDPQTRQIKTR) are excised as a propeptide.

In terms of processing, contains 2 disulfide bonds. Expressed by the venom duct.

Its subcellular location is the secreted. The chain is Conotoxin ba14a from Conus bayani (Bayan's cone).